A 244-amino-acid polypeptide reads, in one-letter code: Ribonuclease P protein component 3 (244 aa).

The protein belongs to the eukaryotic/archaeal RNase P protein component 3 family. Consists of a catalytic RNA component and at least 4-5 protein subunits.

Its subcellular location is the cytoplasm. The catalysed reaction is Endonucleolytic cleavage of RNA, removing 5'-extranucleotides from tRNA precursor.. Part of ribonuclease P, a protein complex that generates mature tRNA molecules by cleaving their 5'-ends. This Methanopyrus kandleri (strain AV19 / DSM 6324 / JCM 9639 / NBRC 100938) protein is Ribonuclease P protein component 3.